Consider the following 400-residue polypeptide: Ribosomal RNA dihydrouridine synthase (400 aa).

Residues alanine 14, aspartate 33, asparagine 34, arginine 40, glycine 46, asparagine 51, valine 131, glutamate 367, and phenylalanine 380 each contribute to the FAD site.

The protein belongs to the BaiN/RdsA family. RdsA subfamily. The cofactor is FAD.

It catalyses the reaction a 5,6-dihydrouridine in mRNA + NAD(+) = a uridine in mRNA + NADH + H(+). Functionally, catalyzes the synthesis of 5,6-dihydrouridine (D) at position 2449 in 23S rRNA. Can use NADH as a source of reducing equivalents but not NADPH. The polypeptide is Ribosomal RNA dihydrouridine synthase (Escherichia coli (strain K12)).